The following is a 381-amino-acid chain: Cytochrome b (381 aa).

The next 4 helical transmembrane spans lie at 34–54 (FGSLLGLCLIIQILTGLFLAM), 78–99 (WLIRNIHANGASLFFICIYLHI), 114–134 (WNIGVILLFLLMATAFVGYVL), and 179–199 (FFAFHFLLPFLILALTIIHLL). Heme b contacts are provided by His-84 and His-98. Heme b is bound by residues His-183 and His-197. Position 202 (His-202) interacts with a ubiquinone. A run of 4 helical transmembrane segments spans residues 227–247 (YKDILGFFAMIFFLAVLTLFI), 289–309 (LGGVLALLFSILILMLVPLLQ), 321–341 (MTQILFWFLVANSIILTWIGG), and 348–368 (FIMVGQIASISYFSMFLIIIP).

This sequence belongs to the cytochrome b family. The cytochrome bc1 complex contains 3 respiratory subunits (MT-CYB, CYC1 and UQCRFS1), 2 core proteins (UQCRC1 and UQCRC2) and probably 6 low-molecular weight proteins. Heme b is required as a cofactor.

It localises to the mitochondrion inner membrane. Its function is as follows. Component of the ubiquinol-cytochrome c reductase complex (complex III or cytochrome b-c1 complex) that is part of the mitochondrial respiratory chain. The b-c1 complex mediates electron transfer from ubiquinol to cytochrome c. Contributes to the generation of a proton gradient across the mitochondrial membrane that is then used for ATP synthesis. The chain is Cytochrome b (mt-cyb) from Galeocerdo cuvier (Tiger shark).